The chain runs to 587 residues: Polyphenol oxidase E, chloroplastic (587 aa).

Residues 1–87 constitute a chloroplast transit peptide; sequence MSSSSSITTT…AANLAPLATA (87 aa). Cystine bridges form between cysteine 98-cysteine 114 and cysteine 113-cysteine 180. Histidine 179, histidine 197, histidine 206, histidine 328, histidine 332, and histidine 363 together coordinate Cu cation. The 2'-(S-cysteinyl)-histidine (Cys-His) cross-link spans 183-197; sequence CNGAYKVGGKELQVH.

Belongs to the tyrosinase family. The cofactor is Cu(2+).

It localises to the plastid. The protein resides in the chloroplast thylakoid lumen. It carries out the reaction 2 catechol + O2 = 2 1,2-benzoquinone + 2 H2O. Catalyzes the oxidation of mono- and o-diphenols to o-diquinones. This is Polyphenol oxidase E, chloroplastic from Solanum lycopersicum (Tomato).